A 364-amino-acid polypeptide reads, in one-letter code: Urease accessory protein UreD (364 aa).

Disordered regions lie at residues 1 to 37 and 201 to 250; these read MDQD…SSPA and PPEV…AGER. 3 stretches are compositionally biased toward low complexity: residues 21 to 37, 209 to 218, and 236 to 248; these read AGSA…SSPA, APDRGAPAAE, and AASS…APAG.

The protein belongs to the UreD family. In terms of assembly, ureD, UreF and UreG form a complex that acts as a GTP-hydrolysis-dependent molecular chaperone, activating the urease apoprotein by helping to assemble the nickel containing metallocenter of UreC. The UreE protein probably delivers the nickel.

Its subcellular location is the cytoplasm. In terms of biological role, required for maturation of urease via the functional incorporation of the urease nickel metallocenter. The chain is Urease accessory protein UreD from Kocuria rhizophila (strain ATCC 9341 / DSM 348 / NBRC 103217 / DC2201).